Reading from the N-terminus, the 293-residue chain is Elongation factor P--(R)-beta-lysine ligase homolog (293 aa).

ATP-binding positions include 86–88 (RNN), 223–224 (EL), and Gly272.

This sequence belongs to the class-II aminoacyl-tRNA synthetase family. EpmA subfamily. In terms of assembly, homodimer.

This chain is Elongation factor P--(R)-beta-lysine ligase homolog (genX), found in Aquifex aeolicus (strain VF5).